Reading from the N-terminus, the 493-residue chain is UDP-N-acetylmuramoyl-L-alanyl-D-glutamate--2,6-diaminopimelate ligase (493 aa).

Ser30 contributes to the UDP-N-acetyl-alpha-D-muramoyl-L-alanyl-D-glutamate binding site. 114 to 120 (GTNGKTS) lines the ATP pocket. Residues 156 to 157 (TT), Ser183, Gln189, and Arg191 each bind UDP-N-acetyl-alpha-D-muramoyl-L-alanyl-D-glutamate. Lys223 carries the post-translational modification N6-carboxylysine. Residues Arg386, 410–413 (DNPR), Gly460, and Glu464 each bind meso-2,6-diaminopimelate. The short motif at 410 to 413 (DNPR) is the Meso-diaminopimelate recognition motif element.

Belongs to the MurCDEF family. MurE subfamily. It depends on Mg(2+) as a cofactor. In terms of processing, carboxylation is probably crucial for Mg(2+) binding and, consequently, for the gamma-phosphate positioning of ATP.

Its subcellular location is the cytoplasm. It carries out the reaction UDP-N-acetyl-alpha-D-muramoyl-L-alanyl-D-glutamate + meso-2,6-diaminopimelate + ATP = UDP-N-acetyl-alpha-D-muramoyl-L-alanyl-gamma-D-glutamyl-meso-2,6-diaminopimelate + ADP + phosphate + H(+). It functions in the pathway cell wall biogenesis; peptidoglycan biosynthesis. Functionally, catalyzes the addition of meso-diaminopimelic acid to the nucleotide precursor UDP-N-acetylmuramoyl-L-alanyl-D-glutamate (UMAG) in the biosynthesis of bacterial cell-wall peptidoglycan. The chain is UDP-N-acetylmuramoyl-L-alanyl-D-glutamate--2,6-diaminopimelate ligase from Chromobacterium violaceum (strain ATCC 12472 / DSM 30191 / JCM 1249 / CCUG 213 / NBRC 12614 / NCIMB 9131 / NCTC 9757 / MK).